The sequence spans 523 residues: Cytoplasmic dynein 1 light intermediate chain 1 (523 aa).

Residues 1–45 form a disordered region; that stretch reads MAAVGRVGSFGSSPPGLASTYASGPLANELASGSGGPAAGDDEDG. 74-81 serves as a coordination point for ATP; sequence GEDGAGKT. S207 carries the phosphoserine modification. T213 carries the post-translational modification Phosphothreonine. Disordered regions lie at residues 387 to 434 and 457 to 523; these read PPTA…DPNM and GSPG…GEAS. 2 positions are modified to phosphoserine: S398 and S405. T408 carries the post-translational modification Phosphothreonine. A phosphoserine mark is found at S412, S419, S421, and S427. The segment covering 412-421 has biased composition (low complexity); that stretch reads SVSSNVASVS. Residues 458 to 473 are compositionally biased toward gly residues; it reads SPGGPGVGGSPGGGAA. The span at 474-483 shows a compositional bias: low complexity; that stretch reads GASTSLPPSA. S486 and S510 each carry phosphoserine. A phosphothreonine mark is found at T512 and T513. Residue S516 is modified to Phosphoserine.

It belongs to the dynein light intermediate chain family. In terms of assembly, homodimer. The cytoplasmic dynein 1 complex consists of two catalytic heavy chains (HCs) and a number of non-catalytic subunits presented by intermediate chains (ICs), light intermediate chains (LICs) and light chains (LCs); the composition seems to vary in respect to the IC, LIC and LC composition. The heavy chain homodimer serves as a scaffold for the probable homodimeric assembly of the respective non-catalytic subunits. The ICs and LICs bind directly to the HC dimer and the LCs assemble on the IC dimer. Self-associates. Interacts with DYNC1H1; DYNC1LI1 and DYNC1LI2 bind mutually exclusive to DYNC1H1. Interacts with PCNT. Forms a complex with RAB11FIP3 and RAB11A1; the interaction between DYNC1LI1 and RAB11FIP3 is direct and induces DYNC1LI1 localization onto endosomal membrane; the complex regulates endocytic trafficking. Interacts with RUFY3. In terms of processing, phosphorylated during mitosis but not in interphase.

Its subcellular location is the cytoplasm. The protein resides in the chromosome. It localises to the centromere. It is found in the kinetochore. The protein localises to the cytoskeleton. Its subcellular location is the spindle pole. The protein resides in the recycling endosome membrane. In terms of biological role, acts as one of several non-catalytic accessory components of the cytoplasmic dynein 1 complex that are thought to be involved in linking dynein to cargos and to adapter proteins that regulate dynein function. Cytoplasmic dynein 1 acts as a motor for the intracellular retrograde motility of vesicles and organelles along microtubules. May play a role in binding dynein to membranous organelles or chromosomes. Probably involved in the microtubule-dependent transport of pericentrin. Is required for progress through the spindle assembly checkpoint. The phosphorylated form appears to be involved in the selective removal of MAD1L1 and MAD1L2 but not BUB1B from kinetochores. Forms a functional Rab11/RAB11FIP3/dynein complex onto endosomal membrane that regulates the movement of peripheral sorting endosomes (SE) along microtubule tracks toward the microtubule organizing center/centrosome, generating the endosomal recycling compartment (ERC). The protein is Cytoplasmic dynein 1 light intermediate chain 1 (Dync1li1) of Rattus norvegicus (Rat).